The sequence spans 227 residues: Ribonuclease HII (227 aa).

The 190-residue stretch at 16–205 (SLLAGVDEVG…VKMALDAVGV (190 aa)) folds into the RNase H type-2 domain. 3 residues coordinate a divalent metal cation: Asp-22, Glu-23, and Asp-114.

It belongs to the RNase HII family. Mn(2+) is required as a cofactor. Mg(2+) serves as cofactor.

The protein localises to the cytoplasm. The catalysed reaction is Endonucleolytic cleavage to 5'-phosphomonoester.. Endonuclease that specifically degrades the RNA of RNA-DNA hybrids. The chain is Ribonuclease HII from Marinobacter nauticus (strain ATCC 700491 / DSM 11845 / VT8) (Marinobacter aquaeolei).